The chain runs to 1700 residues: Balbiani ring protein 3 (1700 aa).

The first 20 residues, 1-20, serve as a signal peptide directing secretion; that stretch reads MKTLSSLLLVLAVNVLLIQA.

Salivary gland.

It localises to the secreted. In terms of biological role, used by the larvae to construct a supramolecular structure, the larval tube. Balbiani ring protein 3 could play a role as a transport protein that binds to other proteins intracellularly and in the gland lumen in order to prevent these from forming water-insoluble fibers too early. The chain is Balbiani ring protein 3 (BR3) from Chironomus tentans (Midge).